Here is a 440-residue protein sequence, read N- to C-terminus: Peroxisome proliferator-activated receptor delta (440 aa).

The disordered stretch occupies residues 1 to 53 (MEQPQEETPEAREEEKEEVAMGDGAPELNGGPEHTLPSSSCADLSQNSSPSSL). The span at 36 to 53 (LPSSSCADLSQNSSPSSL) shows a compositional bias: polar residues. The segment at residues 70-144 (NMECRVCGDK…LGMSHNAIRF (75 aa)) is a DNA-binding region (nuclear receptor). NR C4-type zinc fingers lie at residues 73 to 93 (CRVC…CEGC) and 110 to 132 (CDRI…FQKC). The region spanning 210–438 (FVIHDIETLW…HPLLQEIYKD (229 aa)) is the NR LBD domain.

It belongs to the nuclear hormone receptor family. NR1 subfamily. Heterodimer with the retinoid X receptor. Interacts (via domain NR LBD) with CRY1 and CRY2 in a ligand-dependent manner. Post-translationally, 'Lys-48'-linked polyubiquitinated; leading to proteasomal degradation. Deubiquitinated and stabilized by OTUD3. As to expression, heart, adrenal and intestine.

The protein localises to the nucleus. Its function is as follows. Ligand-activated transcription factor key mediator of energy metabolism in adipose tissues. Receptor that binds peroxisome proliferators such as hypolipidemic drugs and fatty acids. Has a preference for poly-unsaturated fatty acids, such as gamma-linoleic acid and eicosapentanoic acid. Once activated by a ligand, the receptor binds to promoter elements of target genes. Regulates the peroxisomal beta-oxidation pathway of fatty acids. Functions as transcription activator for the acyl-CoA oxidase gene. Decreases expression of NPC1L1 once activated by a ligand. In Mus musculus (Mouse), this protein is Peroxisome proliferator-activated receptor delta (Ppard).